The primary structure comprises 310 residues: Acetyl-coenzyme A carboxylase carboxyl transferase subunit beta (310 aa).

The CoA carboxyltransferase N-terminal domain maps to 27-296 (LWRKCPNCEA…QDRDAEPDDT (270 aa)). The Zn(2+) site is built by Cys31, Cys34, Cys50, and Cys53. The C4-type zinc finger occupies 31–53 (CPNCEAVLYLPELERHQSVCPKC). Residues 282 to 310 (THQPHQDRDAEPDDTASQSTLDEFSQADH) form a disordered region.

This sequence belongs to the AccD/PCCB family. Acetyl-CoA carboxylase is a heterohexamer composed of biotin carboxyl carrier protein (AccB), biotin carboxylase (AccC) and two subunits each of ACCase subunit alpha (AccA) and ACCase subunit beta (AccD). Zn(2+) serves as cofactor.

The protein localises to the cytoplasm. The catalysed reaction is N(6)-carboxybiotinyl-L-lysyl-[protein] + acetyl-CoA = N(6)-biotinyl-L-lysyl-[protein] + malonyl-CoA. It functions in the pathway lipid metabolism; malonyl-CoA biosynthesis; malonyl-CoA from acetyl-CoA: step 1/1. Functionally, component of the acetyl coenzyme A carboxylase (ACC) complex. Biotin carboxylase (BC) catalyzes the carboxylation of biotin on its carrier protein (BCCP) and then the CO(2) group is transferred by the transcarboxylase to acetyl-CoA to form malonyl-CoA. This Chromohalobacter salexigens (strain ATCC BAA-138 / DSM 3043 / CIP 106854 / NCIMB 13768 / 1H11) protein is Acetyl-coenzyme A carboxylase carboxyl transferase subunit beta.